A 338-amino-acid chain; its full sequence is MTSHVTAHDVGGNEDIGTDHVPWYKQPLPLCTQVMRFILLLLLTVMFLGVAILVANARMPDPEKVRPLPDLLLESIPKVALLENGTNVIIFLLNATTVVVGFKVFLLERHMNGLPRVTFLVGVPKIGSFLNRMAFGVLDSGRRPFPLKNVFPIMAIRFLTSYAVVMVFRAFVIMGTSYPATDNHCQNPQVIEHPVLNVILTLVTLGSGAIHCGDLMFSGHTMILSLAFILAWDYSPFLHPWAVRVWVSVLLPISYYCILASRSHYTDDILVAMYVMIATYKVIDHAETGAPWQMQLLIRWMPWPGANTIEKWTADEVVVVVQTPAEDSTDASAALPEH.

Residues 1-36 (MTSHVTAHDVGGNEDIGTDHVPWYKQPLPLCTQVMR) are Cytoplasmic-facing. Residues 37–57 (FILLLLLTVMFLGVAILVANA) traverse the membrane as a helical segment. The Extracellular portion of the chain corresponds to 58–87 (RMPDPEKVRPLPDLLLESIPKVALLENGTN). A helical membrane pass occupies residues 88 to 108 (VIIFLLNATTVVVGFKVFLLE). Topologically, residues 109-116 (RHMNGLPR) are cytoplasmic. Residues 117–137 (VTFLVGVPKIGSFLNRMAFGV) traverse the membrane as a helical segment. The Extracellular portion of the chain corresponds to 138–152 (LDSGRRPFPLKNVFP). A helical transmembrane segment spans residues 153-173 (IMAIRFLTSYAVVMVFRAFVI). The Cytoplasmic portion of the chain corresponds to 174–189 (MGTSYPATDNHCQNPQ). A helical transmembrane segment spans residues 190 to 210 (VIEHPVLNVILTLVTLGSGAI). Topologically, residues 211–222 (HCGDLMFSGHTM) are extracellular. The active site involves His-220. The chain crosses the membrane as a helical span at residues 223–243 (ILSLAFILAWDYSPFLHPWAV). At 244 to 338 (RVWVSVLLPI…TDASAALPEH (95 aa)) the chain is on the cytoplasmic side. Catalysis depends on residues His-264 and Asp-268.

This sequence belongs to the sphingomyelin synthase family.

It localises to the membrane. Bidirectional lipid inositolphosphotransferase capable of converting phosphatidylinositol (PI) and ceramide to inositol-phosphorylceramide (IPC) and diacylglycerol (DAG) and vice versa. Direction is dependent on the relative concentrations of DAG and ceramide as phosphoinositol acceptors. Essential for viability of the pathogenic bloodstream stage of this human protozoan parasite and, consequently, can be considered as potential drug target. The sequence is that of Phosphatidylinositol:ceramide inositolphosphotransferase from Leishmania major.